The following is a 340-amino-acid chain: 3-hydroxybenzoate synthase (340 aa).

Substrate-binding residues include Tyr-147, Arg-154, Tyr-207, and Arg-220. Glu-334 acts as the Proton acceptor in catalysis.

The protein belongs to the FkbO/Hyg5 family. As to quaternary structure, trimer.

The enzyme catalyses chorismate = 3-hydroxybenzoate + pyruvate. In terms of biological role, involved in the biosynthesis of BC325, a rapamycin analog containing a 3-hydroxybenzoate starter unit. Catalyzes the hydrolysis of chorismate via an intramolecular mechanism to yield 3-hydroxybenzoate (3HBA). The polypeptide is 3-hydroxybenzoate synthase (Streptomyces hygroscopicus).